The primary structure comprises 148 residues: UPF0758 protein YeeS (148 aa).

The 123-residue stretch at 26 to 148 (AFTSTRAARE…VFSFAEHGLL (123 aa)) folds into the MPN domain. Zn(2+) contacts are provided by His97, His99, and Asp110. Residues 97-110 (HNHPSGEVTPSKAD) carry the JAMM motif motif.

The protein belongs to the UPF0758 family.

The polypeptide is UPF0758 protein YeeS (yeeS) (Escherichia coli (strain K12)).